The chain runs to 1531 residues: Protein turtle (1531 aa).

Topologically, residues Met-1–Thr-858 are extracellular. A disordered region spans residues Gln-19 to Lys-44. Ig-like C2-type domains lie at Pro-132–Thr-243, Pro-253–Ile-340, Gly-344–Ser-436, Pro-440–Asp-529, and Pro-536–Thr-624. 5 cysteine pairs are disulfide-bonded: Cys-150–Cys-227, Cys-275–Cys-324, Cys-366–Cys-419, Cys-462–Cys-513, and Cys-558–Cys-611. Fibronectin type-III domains follow at residues Gln-632–Asp-728 and Pro-760–Arg-851. Residues Ala-859 to Val-879 traverse the membrane as a helical segment. At Lys-880–Cys-1531 the chain is on the cytoplasmic side. 2 disordered regions span residues Glu-1248 to Gln-1269 and Asn-1318 to Arg-1395. A compositionally biased stretch (low complexity) spans Ser-1333–Ser-1349. Polar residues predominate over residues Gln-1380 to Gly-1389.

It belongs to the immunoglobulin superfamily. Turtle family. As to quaternary structure, interacts with bdl. As to expression, exclusively expressed in the central nervous system.

It localises to the membrane. Functionally, essential protein that plays a role in the establishment of coordinated motor control. In the developing eye, involved in axonal targeting of the R7 photoreceptor. The sequence is that of Protein turtle (tutl) from Drosophila melanogaster (Fruit fly).